A 434-amino-acid polypeptide reads, in one-letter code: Histidinol dehydrogenase (434 aa).

Residues Tyr-130, Gln-188, and Asn-211 each coordinate NAD(+). Ser-237, Gln-259, and His-262 together coordinate substrate. Zn(2+) is bound by residues Gln-259 and His-262. Residues Glu-326 and His-327 each act as proton acceptor in the active site. Substrate contacts are provided by His-327, Asp-360, Glu-414, and His-419. Asp-360 serves as a coordination point for Zn(2+). His-419 is a Zn(2+) binding site.

Belongs to the histidinol dehydrogenase family. As to quaternary structure, homodimer. Requires Zn(2+) as cofactor.

The catalysed reaction is L-histidinol + 2 NAD(+) + H2O = L-histidine + 2 NADH + 3 H(+). Its pathway is amino-acid biosynthesis; L-histidine biosynthesis; L-histidine from 5-phospho-alpha-D-ribose 1-diphosphate: step 9/9. Functionally, catalyzes the sequential NAD-dependent oxidations of L-histidinol to L-histidinaldehyde and then to L-histidine. The protein is Histidinol dehydrogenase of Escherichia coli O157:H7.